A 338-amino-acid polypeptide reads, in one-letter code: Trans-enoyl reductase fsr4 (338 aa).

65-68 (KDWK) contributes to the NADP(+) binding site. 147 to 153 (AAFTAAC) is a substrate binding site. Residues 182 to 185 (SSAV), 205 to 208 (AGRA), Y227, and 277 to 278 (II) contribute to the NADP(+) site.

The protein belongs to the zinc-containing alcohol dehydrogenase family.

Trans-enoyl reductase; part of the gene cluster that mediates the biosynthesis of fusarubins, highly pigmented naphthoquinones responsible for the coloration of the fruiting bodies. The non-reducing polyketide synthase FSR1 is responsible for the condensation of seven acetyl-CoA units to yield a haptaketide. After rings A and B are formed by aldol-type cyclization, the PKS-derived product is released as 6-O-demethylfusarubinaldehyde. Then, two hydroxyl groups at C-5 and C-10 are incorporated by FSR3, and simultaneously hydroxyl groups at C-6 and C-8 are methylated by FSR2. The aldehyde is, on the one hand, reduced by FSR3 to 8-O-methylfusarubin alcohol, which equilibrates mainly with 8-O-methylfusarubin and only small amounts of 8-O-methylnectriafurone. On the other hand, the aldehyde can be oxidized to form 8-O-methylfusarubinic acid, a reaction driven by FSR3 equilibrating with 8-O-methylfusarubinlactone, finally resulting in 8-O-methylanhydrofusarubinlactol after a further reduction step and loss of water. 8-O-Methylfusarubinic acid can also undergo decarboxylation, resulting in 8-O-methyl-13-hydroxynorjavanicin after another hydroxylation step at C-13. Both steps are most likely also accomplished by FSR3. No enzymatic function has been determined so far for either FSR4 and FSR5. Their deletion does not alter the product spectrum, but the possibility that they catalyze specific enzymatic steps during perithecium development cannot be ruled out. FSR4 might possess a regulatory function in the biosynthesis of fusarubins. The polypeptide is Trans-enoyl reductase fsr4 (Gibberella fujikuroi (strain CBS 195.34 / IMI 58289 / NRRL A-6831) (Bakanae and foot rot disease fungus)).